A 175-amino-acid polypeptide reads, in one-letter code: MSSKSTKRAKIEDPKDNVFMVEKVLDKRTGKAGRDEFLIQWQGFPESDSSWEPRENLQCVEMLDEFEREFSKREKPIRKRHSQKPEPSEDQADPEEDKDEKKETNQNDKFSLEGKQLKCIVGLTKGPGELHFLCKFSDDTARLLPAKEVNSRYPSQVIRYYESKLTIQDPKADEL.

The Chromo domain maps to 19-78; the sequence is FMVEKVLDKRTGKAGRDEFLIQWQGFPESDSSWEPRENLQCVEMLDEFEREFSKREKPIR. The interval 71 to 109 is disordered; that stretch reads SKREKPIRKRHSQKPEPSEDQADPEEDKDEKKETNQNDK. The segment covering 88 to 98 has biased composition (acidic residues); the sequence is SEDQADPEEDK. Basic and acidic residues predominate over residues 99-109; that stretch reads DEKKETNQNDK. The 58-residue stretch at 115–172 folds into the Chromo 2; shadow subtype domain; that stretch reads KQLKCIVGLTKGPGELHFLCKFSDDTARLLPAKEVNSRYPSQVIRYYESKLTIQDPKA.

As to quaternary structure, interacts with histone H3 when di-, or tri-methylated at 'Lys-27' (H3K27me2/me3), or tri-methylated at 'Lys-9' (H3K9me3). Interacts with Tar DNA-binding protein homolog tdp-1; interaction may maintain localization of hpl-2 to gene bodies. Interacts with histone H1 his-24, probably via interaction with hpl-1. Interacts with chromobox protein homolog hpl-1. May form homodimers. Interacts (via chromo (shadow subtype) domain) with zinc finger protein lin-13 (via PLVPV motif); the interaction is direct and influences localization of hpl-2 to nuclear foci.

It is found in the nucleus. The protein resides in the chromosome. Functionally, seems to be involved in transcriptional silencing in heterochromatin-like complexes. Probably does not act as global transcriptional repressor, instead targeting a subset of genes. Involved in RNA processing mediated by Tar DNA-binding protein homolog tdp-1. Plays a role in linking epigenetic regulation with the innate immune response. Involved in the endoplasmic reticulum (ER) stress response via modulation of the unfolded protein response (UPR), acting mainly through the IRE1-XBP1 pathway and perhaps, to a lesser extent, through the autophagy pathway. May act in a common pathway with retinoblastoma-like protein homolog lin-35 and zinc finger protein lin-13 to influence the ER stress response in the intestine. Plays a role in the formation of the vulva and in fertility, acting together with a CoREST-like complex, and chromobox protein homolog hpl-1. Acting in concert with hpl-1 and histone H1 protein his-24, involved in reproduction, somatic gonad development, male tail development and vulval cell fate specification; perhaps as a result of modulating expression of Hox genes mab-5 and egl-5. In vulval cell fate specification may act by repressing transcription, of EGF family gene lin-3 in hypodermal hyp7, and of homeobox lin-39 in vulval precursor cells (VPC). Role in growth and somatic gonad development is antagonized by histone-lysine N-methyltransferase set-2/SET1. Required for larval development, acting redundantly with hpl-1. Plays a role in regulation of the developmentally arrested larval state known as dauer, longevity, and lipid metabolism. In Caenorhabditis elegans, this protein is Chromobox protein homolog hpl-2.